Reading from the N-terminus, the 149-residue chain is MFKHSTGILSRTVSARSPTLVLRTFTTKAPKIYTFDQVRNLVEHPNDKKLLVDVREPKEVKDYKMPTTINIPVNSAPGALGLPEKEFHKVFQFAKPPHDKELIFLCAKGVRAKTAEELARSYGYENTGIYPGSITEWLAKGGADVKPKK.

The N-terminal 25 residues, 1–25 (MFKHSTGILSRTVSARSPTLVLRTF), are a transit peptide targeting the mitochondrion. One can recognise a Rhodanese domain in the interval 45-146 (PNDKKLLVDV…WLAKGGADVK (102 aa)). Cysteine 106 serves as the catalytic Cysteine persulfide intermediate.

Its subcellular location is the mitochondrion. The catalysed reaction is thiosulfate + hydrogen cyanide = thiocyanate + sulfite + 2 H(+). Thiosulfate sulfurtransferase which catalyzes the transfer of sulfane sulfur from thiosulfate to cyanide. The chain is Thiosulfate sulfurtransferase RDL2, mitochondrial (RDL2) from Saccharomyces cerevisiae (strain ATCC 204508 / S288c) (Baker's yeast).